The chain runs to 367 residues: Flagellar P-ring protein (367 aa).

A signal peptide spans 1 to 21 (MKIIQTFFIITLLWLSQGVQA).

The protein belongs to the FlgI family. In terms of assembly, the basal body constitutes a major portion of the flagellar organelle and consists of four rings (L,P,S, and M) mounted on a central rod.

The protein resides in the periplasm. Its subcellular location is the bacterial flagellum basal body. In terms of biological role, assembles around the rod to form the L-ring and probably protects the motor/basal body from shearing forces during rotation. This is Flagellar P-ring protein from Nitrosococcus oceani (strain ATCC 19707 / BCRC 17464 / JCM 30415 / NCIMB 11848 / C-107).